A 278-amino-acid chain; its full sequence is Phosphatidylglycerol--prolipoprotein diacylglyceryl transferase (278 aa).

4 helical membrane-spanning segments follow: residues 18-38, 55-75, 90-110, and 115-135; these read IQVH…TILA, LILW…VIFE, WDGG…VYLF, and WIPV…AQGI. Arginine 137 contributes to the a 1,2-diacyl-sn-glycero-3-phospho-(1'-sn-glycerol) binding site. Helical transmembrane passes span 177-197, 207-227, and 237-257; these read QPTF…LMSL, GEVF…VEGM, and IRVS…ILVF.

Belongs to the Lgt family.

The protein resides in the cell membrane. The enzyme catalyses L-cysteinyl-[prolipoprotein] + a 1,2-diacyl-sn-glycero-3-phospho-(1'-sn-glycerol) = an S-1,2-diacyl-sn-glyceryl-L-cysteinyl-[prolipoprotein] + sn-glycerol 1-phosphate + H(+). It participates in protein modification; lipoprotein biosynthesis (diacylglyceryl transfer). Functionally, catalyzes the transfer of the diacylglyceryl group from phosphatidylglycerol to the sulfhydryl group of the N-terminal cysteine of a prolipoprotein, the first step in the formation of mature lipoproteins. This chain is Phosphatidylglycerol--prolipoprotein diacylglyceryl transferase, found in Pediococcus pentosaceus (strain ATCC 25745 / CCUG 21536 / LMG 10740 / 183-1w).